A 580-amino-acid chain; its full sequence is Zinc finger CCCH domain-containing protein 47 (580 aa).

2 ANK repeats span residues 72 to 102 (EERTPLMVAAMYGSIKVLTFIVSTGKSDVNR) and 107 to 139 (ERVTPLHCAVAGCSVNMIEVINVLLDASALVNS). C3H1-type zinc fingers lie at residues 251 to 278 (PYTCVPCPEFRKGSCPKGDSCEYAHGVF) and 286 to 310 (QYKTRLCKDETGCARKVCFFAHKRE). Residues 421 to 451 (YVSSPSRNSQMGQNMNQHYPSSPVRQPPSQH) are disordered.

As to expression, expressed in roots and anthers.

The protein localises to the nucleus. Its function is as follows. Involved in salt stress response. May positively modulate plant tolerance to salt stress. The polypeptide is Zinc finger CCCH domain-containing protein 47 (Arabidopsis thaliana (Mouse-ear cress)).